The following is a 266-amino-acid chain: BTB/POZ domain-containing protein KCTD2 (266 aa).

The residue at position 2 (Ala2) is an N-acetylalanine. The disordered stretch occupies residues 38–79 (GRHPADTAASPPPPRTAGARARTSGADGRRRGRPLGPAQRGR). A compositionally biased stretch (low complexity) spans 53–63 (TAGARARTSGA). Positions 76–174 (QRGRYLLRDT…LVKERIRDNE (99 aa)) constitute a BTB domain.

The protein is BTB/POZ domain-containing protein KCTD2 (Kctd2) of Mus musculus (Mouse).